A 245-amino-acid chain; its full sequence is NAD(P)H-quinone oxidoreductase subunit K (245 aa).

[4Fe-4S] cluster is bound by residues Cys-58, Cys-59, Cys-123, and Cys-154. A disordered region spans residues 210 to 245 (SDTRSAPPKELAEAIGMPIPPALLTEKAQKEEQTRG). Basic and acidic residues predominate over residues 236 to 245 (KAQKEEQTRG).

This sequence belongs to the complex I 20 kDa subunit family. In terms of assembly, NDH-1 can be composed of about 15 different subunits; different subcomplexes with different compositions have been identified which probably have different functions. [4Fe-4S] cluster serves as cofactor.

It localises to the cellular thylakoid membrane. It catalyses the reaction a plastoquinone + NADH + (n+1) H(+)(in) = a plastoquinol + NAD(+) + n H(+)(out). The catalysed reaction is a plastoquinone + NADPH + (n+1) H(+)(in) = a plastoquinol + NADP(+) + n H(+)(out). NDH-1 shuttles electrons from an unknown electron donor, via FMN and iron-sulfur (Fe-S) centers, to quinones in the respiratory and/or the photosynthetic chain. The immediate electron acceptor for the enzyme in this species is believed to be plastoquinone. Couples the redox reaction to proton translocation, and thus conserves the redox energy in a proton gradient. Cyanobacterial NDH-1 also plays a role in inorganic carbon-concentration. The sequence is that of NAD(P)H-quinone oxidoreductase subunit K from Nostoc punctiforme (strain ATCC 29133 / PCC 73102).